Here is a 456-residue protein sequence, read N- to C-terminus: L-2-hydroxyglutarate dehydrogenase, mitochondrial (456 aa).

A mitochondrion-targeting transit peptide spans 1–20 (MLKTSFLLSKRNAVSLSRVL).

It belongs to the L2HGDH family. FAD is required as a cofactor.

The protein localises to the mitochondrion. The catalysed reaction is (S)-2-hydroxyglutarate + A = 2-oxoglutarate + AH2. This is L-2-hydroxyglutarate dehydrogenase, mitochondrial from Nematostella vectensis (Starlet sea anemone).